The chain runs to 376 residues: Queuine tRNA-ribosyltransferase (376 aa).

Aspartate 93 functions as the Proton acceptor in the catalytic mechanism. Substrate is bound by residues 93–97 (DSGGF), aspartate 147, glutamine 191, and glycine 218. The interval 249 to 255 (GVGKPED) is RNA binding. Residue aspartate 268 is the Nucleophile of the active site. An RNA binding; important for wobble base 34 recognition region spans residues 273 to 277 (TRNAR). Positions 306, 308, 311, and 337 each coordinate Zn(2+).

It belongs to the queuine tRNA-ribosyltransferase family. As to quaternary structure, homodimer. Within each dimer, one monomer is responsible for RNA recognition and catalysis, while the other monomer binds to the replacement base PreQ1. It depends on Zn(2+) as a cofactor.

It catalyses the reaction 7-aminomethyl-7-carbaguanine + guanosine(34) in tRNA = 7-aminomethyl-7-carbaguanosine(34) in tRNA + guanine. Its pathway is tRNA modification; tRNA-queuosine biosynthesis. Functionally, catalyzes the base-exchange of a guanine (G) residue with the queuine precursor 7-aminomethyl-7-deazaguanine (PreQ1) at position 34 (anticodon wobble position) in tRNAs with GU(N) anticodons (tRNA-Asp, -Asn, -His and -Tyr). Catalysis occurs through a double-displacement mechanism. The nucleophile active site attacks the C1' of nucleotide 34 to detach the guanine base from the RNA, forming a covalent enzyme-RNA intermediate. The proton acceptor active site deprotonates the incoming PreQ1, allowing a nucleophilic attack on the C1' of the ribose to form the product. After dissociation, two additional enzymatic reactions on the tRNA convert PreQ1 to queuine (Q), resulting in the hypermodified nucleoside queuosine (7-(((4,5-cis-dihydroxy-2-cyclopenten-1-yl)amino)methyl)-7-deazaguanosine). This Histophilus somni (strain 129Pt) (Haemophilus somnus) protein is Queuine tRNA-ribosyltransferase.